A 221-amino-acid chain; its full sequence is Iron-sulfur cluster assembly SufBD family protein ycf24 (221 aa).

It belongs to the iron-sulfur cluster assembly SufBD family.

The protein resides in the plastid. It is found in the chloroplast. This chain is Iron-sulfur cluster assembly SufBD family protein ycf24 (ycf24), found in Galdieria sulphuraria (Red alga).